The chain runs to 378 residues: Acetylornithine deacetylase (378 aa).

His-76 contributes to the Zn(2+) binding site. Asp-78 is a catalytic residue. Asp-108 lines the Zn(2+) pocket. Glu-140 is a catalytic residue. Glu-141, Glu-165, and His-351 together coordinate Zn(2+).

It belongs to the peptidase M20A family. ArgE subfamily. In terms of assembly, homodimer. Zn(2+) is required as a cofactor. It depends on Co(2+) as a cofactor. Requires glutathione as cofactor.

It is found in the cytoplasm. It carries out the reaction N(2)-acetyl-L-ornithine + H2O = L-ornithine + acetate. It participates in amino-acid biosynthesis; L-arginine biosynthesis; L-ornithine from N(2)-acetyl-L-ornithine (linear): step 1/1. Functionally, catalyzes the hydrolysis of the amide bond of N(2)-acetylated L-amino acids. Cleaves the acetyl group from N-acetyl-L-ornithine to form L-ornithine, an intermediate in L-arginine biosynthesis pathway, and a branchpoint in the synthesis of polyamines. The sequence is that of Acetylornithine deacetylase from Vibrio parahaemolyticus serotype O3:K6 (strain RIMD 2210633).